The primary structure comprises 130 residues: Small ribosomal subunit protein uS8 (130 aa).

It belongs to the universal ribosomal protein uS8 family.

The protein is Small ribosomal subunit protein uS8 (RPS22) of Kluyveromyces marxianus (Yeast).